Consider the following 85-residue polypeptide: Small ribosomal subunit protein uS17 (85 aa).

It belongs to the universal ribosomal protein uS17 family. As to quaternary structure, part of the 30S ribosomal subunit.

Functionally, one of the primary rRNA binding proteins, it binds specifically to the 5'-end of 16S ribosomal RNA. This chain is Small ribosomal subunit protein uS17, found in Acetivibrio thermocellus (strain ATCC 27405 / DSM 1237 / JCM 9322 / NBRC 103400 / NCIMB 10682 / NRRL B-4536 / VPI 7372) (Clostridium thermocellum).